A 457-amino-acid polypeptide reads, in one-letter code: MFIVSRLKDLTIITNRLRHYFRNMDVKELQPPSSVRGMQELQREQFRKIVQVPRLRVPESQVQRVMPLVKKFLLKMEHLHPVRAVDQSREILLHPTPVKNWDSLPTEDLQRQKVNAENFSFADLELRYENWSANEILKSVLPTEEEGLTSYSRIGHIAHLNLRDHLLPYKQLIGQVLRDKLPNCRTVVNKASSIDNTYRNFQLELICGDPDYQVETKENGVPFEFDFSKVYWNPRLSTEHERIVKMLKSDDVLYDVFAGVGPFSIPAAKKRCHVLANDLNPESFRWLQHNAKRNKCLPNIKMSNKDGRQFIVEELREDLLKRLCTTDTTTYGIHITMNLPAMAVEFLDAFRGLYSADELAQLPTNVCYPTVHVYSFAKGENTKELVRQLVESNLGASLDENLLQGINFVRNVAPNKDMYRVSFKLSLNMLTTLKEVEVTRKRYAEEELEVATKVKCV.

Residues histidine 240, aspartate 278–leucine 279, aspartate 306–glycine 307, and asparagine 338 contribute to the S-adenosyl-L-methionine site.

The protein belongs to the class I-like SAM-binding methyltransferase superfamily. TRM5/TYW2 family. In terms of assembly, monomer.

It localises to the mitochondrion matrix. It is found in the nucleus. Its subcellular location is the cytoplasm. It carries out the reaction guanosine(37) in tRNA + S-adenosyl-L-methionine = N(1)-methylguanosine(37) in tRNA + S-adenosyl-L-homocysteine + H(+). Functionally, specifically methylates the N1 position of guanosine-37 in various cytoplasmic and mitochondrial tRNAs. Methylation is not dependent on the nature of the nucleoside 5' of the target nucleoside. This is the first step in the biosynthesis of wybutosine (yW), a modified base adjacent to the anticodon of tRNAs and required for accurate decoding. This Drosophila melanogaster (Fruit fly) protein is tRNA (guanine(37)-N(1))-methyltransferase.